A 122-amino-acid chain; its full sequence is Holo-[acyl-carrier-protein] synthase (122 aa).

Positions 8 and 60 each coordinate Mg(2+).

Belongs to the P-Pant transferase superfamily. AcpS family. Requires Mg(2+) as cofactor.

Its subcellular location is the cytoplasm. The enzyme catalyses apo-[ACP] + CoA = holo-[ACP] + adenosine 3',5'-bisphosphate + H(+). Transfers the 4'-phosphopantetheine moiety from coenzyme A to a Ser of acyl-carrier-protein. The chain is Holo-[acyl-carrier-protein] synthase from Anaplasma phagocytophilum (strain HZ).